We begin with the raw amino-acid sequence, 152 residues long: Homeobox protein ceh-63 (152 aa).

A compositionally biased stretch (polar residues) spans 21–30 (NDTNSSQQIK). Disordered stretches follow at residues 21–48 (NDTN…RTTF) and 92–126 (RRTK…SQHV). Residues 35 to 44 (PPKRSNRPTK) show a composition bias toward basic residues. Residues 41-100 (RPTKRTTFTSEQVTLLELEFAKNEYICKDRRGELAQTIELTECQVKTWFQNRRTKKRRCT) constitute a DNA-binding region (homeobox). Positions 116–126 (PSPQNPSSQHV) are enriched in polar residues.

As to quaternary structure, may interact with homeobox protein ceh-14.

It is found in the nucleus. Its function is as follows. Probable transcription factor, modulating expression of helix-loop-helix protein mbr-1, perhaps acting in concert with homeobox protein ceh-14. May play a minor role in axon guidance in the DVC interneuron. The polypeptide is Homeobox protein ceh-63 (Caenorhabditis elegans).